Here is a 118-residue protein sequence, read N- to C-terminus: Large ribosomal subunit protein bL20 (118 aa).

The protein belongs to the bacterial ribosomal protein bL20 family.

Binds directly to 23S ribosomal RNA and is necessary for the in vitro assembly process of the 50S ribosomal subunit. It is not involved in the protein synthesizing functions of that subunit. This chain is Large ribosomal subunit protein bL20, found in Sulfurimonas denitrificans (strain ATCC 33889 / DSM 1251) (Thiomicrospira denitrificans (strain ATCC 33889 / DSM 1251)).